The following is a 309-amino-acid chain: Caspase-7 (309 aa).

Residues 1-24 constitute a propeptide, N-terminally processed; sequence MSGDQHADRSSGEKSNGDQDDTVD. Residues 1–31 show a composition bias toward basic and acidic residues; that stretch reads MSGDQHADRSSGEKSNGDQDDTVDAKPDRSS. Residues 1–53 form a disordered region; that stretch reads MSGDQHADRSSGEKSNGDQDDTVDAKPDRSSRLSLFAKKKKNGEEEQPKSSLS. An exosite region spans residues 39–42; the sequence is KKKN. The segment at 81-92 is loop L1; that stretch reads KNFEDKTGMGTR. Residues His-149 and Cys-191 contribute to the active site. A loop L2 region spans residues 192–201; that stretch reads RGSEFDEGIQ. A propeptide spanning residues 204 to 214 is cleaved from the precursor; the sequence is SGPANDTLETD. The loop L3 stretch occupies residues 234-246; sequence VPGYYSWRNPGRG. A loop L4 region spans residues 282 to 296; it reads ESQSDDPRFSEKKQI.

Belongs to the peptidase C14A family. In terms of assembly, heterotetramer that consists of two anti-parallel arranged heterodimers, each one formed by a 20 kDa (p20) and a 11 kDa (p11) subunit. Cleavage by different proteases, such as granzyme B (GZMB), caspase-1 (CASP1), caspase-8 (CASP8) or caspase-9 (CASP9) generate the two active subunits. Its involvement in different programmed cell death processes is probably specified by the protease that activates CASP7. Cleaved and activated by initiator caspases (CASP8 and/or CASP9), leading to execution phase of apoptosis. Cleavage and maturation by GZMB regulates granzyme-mediated programmed cell death. Cleaved and activated by CASP1 in response to bacterial infection.

Its subcellular location is the cytoplasm. It is found in the cytosol. It localises to the nucleus. The protein localises to the secreted. The protein resides in the extracellular space. It catalyses the reaction Strict requirement for an Asp residue at position P1 and has a preferred cleavage sequence of Asp-Glu-Val-Asp-|-.. With respect to regulation, during activation, the N-terminal disordered prodomain is removed by cleavage. Concomitantly, double cleavage gives rise to a large Caspase-7 subunit p20 and a small Caspase-7 subunit p11. The two large and two small subunits then assemble to form the active CASP7 complex. Can be cleaved and activated by different caspases, depending on the context. Cleaved and activated by initiator caspases (CASP8 and/or CASP9), leading to execution phase of apoptosis. Cleavage and maturation by GZMB regulates granzyme-mediated programmed cell death. Cleavage and maturation by CASP1 regulates pyroptosis. Inhibited by BIRC6; following inhibition of BIRC6-caspase binding by DIABLO/SMAC, BIRC6 is subjected to caspase cleavage, leading to an increase in active caspases. In terms of biological role, thiol protease involved in different programmed cell death processes, such as apoptosis, pyroptosis or granzyme-mediated programmed cell death, by proteolytically cleaving target proteins. Has a marked preference for Asp-Glu-Val-Asp (DEVD) consensus sequences, with some plasticity for alternate non-canonical sequences. Its involvement in the different programmed cell death processes is probably determined by upstream proteases that activate CASP7. Acts as an effector caspase involved in the execution phase of apoptosis: following cleavage and activation by initiator caspases (CASP8 and/or CASP9), mediates execution of apoptosis by catalyzing cleavage of proteins. Compared to CASP3, acts as a minor executioner caspase and cleaves a limited set of target proteins. Acts as a key regulator of the inflammatory response in response to bacterial infection by catalyzing cleavage and activation of the sphingomyelin phosphodiesterase SMPD1 in the extracellular milieu, thereby promoting membrane repair. Cleaves BIRC6 following inhibition of BIRC6-caspase binding by DIABLO/SMAC. The chain is Caspase-7 from Gallus gallus (Chicken).